The sequence spans 485 residues: Adenosylhomocysteinase (485 aa).

Positions 64, 139, and 205 each coordinate substrate. T206–T208 contributes to the NAD(+) binding site. K235 and D239 together coordinate substrate. NAD(+) is bound by residues N240, G269–G274, E292, N327, I348–H350, and N397.

It belongs to the adenosylhomocysteinase family. NAD(+) is required as a cofactor.

It carries out the reaction S-adenosyl-L-homocysteine + H2O = L-homocysteine + adenosine. Its pathway is amino-acid biosynthesis; L-homocysteine biosynthesis; L-homocysteine from S-adenosyl-L-homocysteine: step 1/1. In terms of biological role, adenosylhomocysteine is a competitive inhibitor of S-adenosyl-L-methionine-dependent methyl transferase reactions; therefore adenosylhomocysteinase may play a key role in the control of methylations via regulation of the intracellular concentration of adenosylhomocysteine. The polypeptide is Adenosylhomocysteinase (SAHH) (Medicago sativa (Alfalfa)).